The sequence spans 65 residues: Large ribosomal subunit protein uL29 (65 aa).

It belongs to the universal ribosomal protein uL29 family.

This Buchnera aphidicola subsp. Baizongia pistaciae (strain Bp) protein is Large ribosomal subunit protein uL29.